Here is a 108-residue protein sequence, read N- to C-terminus: Putative membrane protein insertion efficiency factor (108 aa).

It belongs to the UPF0161 family.

The protein localises to the cell inner membrane. Functionally, could be involved in insertion of integral membrane proteins into the membrane. This chain is Putative membrane protein insertion efficiency factor, found in Chelativorans sp. (strain BNC1).